Here is a 70-residue protein sequence, read N- to C-terminus: ATP synthase subunit epsilon, mitochondrial (70 aa).

Belongs to the eukaryotic ATPase epsilon family. F-type ATPases have 2 components, CF(1) - the catalytic core - and CF(0) - the membrane proton channel. CF(1) has five subunits: alpha(3), beta(3), gamma(1), delta(1), epsilon(1). CF(0) has three main subunits: a, b and c.

The protein localises to the mitochondrion. It is found in the mitochondrion inner membrane. Its function is as follows. Mitochondrial membrane ATP synthase (F(1)F(0) ATP synthase or Complex V) produces ATP from ADP in the presence of a proton gradient across the membrane which is generated by electron transport complexes of the respiratory chain. F-type ATPases consist of two structural domains, F(1) - containing the extramembraneous catalytic core, and F(0) - containing the membrane proton channel, linked together by a central stalk and a peripheral stalk. During catalysis, ATP synthesis in the catalytic domain of F(1) is coupled via a rotary mechanism of the central stalk subunits to proton translocation. Part of the complex F(1) domain and of the central stalk which is part of the complex rotary element. Rotation of the central stalk against the surrounding alpha(3)beta(3) subunits leads to hydrolysis of ATP in three separate catalytic sites on the beta subunits. In Zea mays (Maize), this protein is ATP synthase subunit epsilon, mitochondrial.